The sequence spans 427 residues: Enolase (427 aa).

Gln163 is a binding site for (2R)-2-phosphoglycerate. The active-site Proton donor is Glu205. The Mg(2+) site is built by Asp242, Glu288, and Asp315. (2R)-2-phosphoglycerate is bound by residues Lys340, Arg369, Ser370, and Lys391. Lys340 acts as the Proton acceptor in catalysis.

This sequence belongs to the enolase family. Requires Mg(2+) as cofactor.

The protein resides in the cytoplasm. Its subcellular location is the secreted. It localises to the cell surface. It carries out the reaction (2R)-2-phosphoglycerate = phosphoenolpyruvate + H2O. It functions in the pathway carbohydrate degradation; glycolysis; pyruvate from D-glyceraldehyde 3-phosphate: step 4/5. Catalyzes the reversible conversion of 2-phosphoglycerate (2-PG) into phosphoenolpyruvate (PEP). It is essential for the degradation of carbohydrates via glycolysis. This chain is Enolase, found in Amoebophilus asiaticus (strain 5a2).